The primary structure comprises 557 residues: Nucleolin 1 (557 aa).

Disordered stretches follow at residues 1-297 (MGKS…GGSK), 376-398 (GERG…GDGG), and 474-557 (LVVD…FGDE). Basic and acidic residues predominate over residues 49-63 (QKEKAVKKVPKKVES). 3 stretches are compositionally biased toward acidic residues: residues 64–74 (SDDSDSESEEE), 91–101 (ESSDDSSSDDE), and 124–135 (SSSDDDSSDEEV). Residues 174–184 (AKIAKPAAKDS) are compositionally biased toward low complexity. Residues 186–197 (SSDDDSDEDSED) are compositionally biased toward acidic residues. The segment covering 203 to 217 (KKAAPAAAKAASSSD) has biased composition (low complexity). Residues 218 to 229 (SSDEDSDEESED) are compositionally biased toward acidic residues. Residues 230-247 (EKPAQKKADTKASKKSSS) show a composition bias toward basic and acidic residues. Positions 249-263 (ESSESEEDESEDEEE) are enriched in acidic residues. A compositionally biased stretch (basic and acidic residues) spans 264 to 281 (TPKKKSSDVEMVDAEKSS). The region spanning 297 to 374 (KTLFAANLSF…REIRLDIAQE (78 aa)) is the RRM 1 domain. The RRM 2 domain occupies 401–481 (KKIFVKGFDA…FYLVVDEPRP (81 aa)). The segment covering 485–503 (SSGGGGFGRGNGRFGSGGG) has biased composition (gly residues).

Interacts with THAL in the nucleus. As to expression, expressed in roots, leaves, shoots and flowers.

The protein resides in the nucleus. Its subcellular location is the nucleolus. Its function is as follows. Involved in pre-rRNA processing and ribosome assembly. Is associated with intranucleolar chromatin and pre-ribosomal particles and plays a role in controlling activation and repression of a specific subset of rRNA genes located in distinctive nucleolar organizer regions. Binds specifically rDNA chromatin and may be required to maintain rDNA chromatin structure, but is probably not required for the overall histone methylation status of 45S rRNA genes. Involved in leaf polarity establishment by functioning cooperatively with AS1 to repress abaxial genes ARF3, ARF4, KAN1, KAN2, YAB1 and YAB5, and the knox homeobox genes KNAT1, KNAT2, KNAT6, and STM to promote adaxial development in leaf primordia at shoot apical meristems at high temperatures. This Arabidopsis thaliana (Mouse-ear cress) protein is Nucleolin 1.